A 128-amino-acid polypeptide reads, in one-letter code: KESSAKKFQRQHIDSSGSPSTNPNYCNAMMKSRNMTQERCKPVNTFVHEPLADVQAVCFQKNVPCKNGQSNCYESTSNMHITDCRLTSNSKFPDCLYRTSQEEKSIIVACEGNPYVPVHFDASVAASA.

A disordered region spans residues 1–25; it reads KESSAKKFQRQHIDSSGSPSTNPNY. Substrate-binding residues include Lys7 and Arg10. His12 acts as the Proton acceptor in catalysis. Polar residues predominate over residues 14–25; that stretch reads DSSGSPSTNPNY. 4 cysteine pairs are disulfide-bonded: Cys26-Cys84, Cys40-Cys95, Cys58-Cys110, and Cys65-Cys72. N-linked (GlcNAc...) asparagine glycosylation is present at Asn34. Residues 41-45, Lys66, and Arg85 contribute to the substrate site; that span reads KPVNT. The active-site Proton donor is the His119.

The protein belongs to the pancreatic ribonuclease family. Monomer. Interacts with and forms tight 1:1 complexes with RNH1. Dimerization of two such complexes may occur. Interaction with RNH1 inhibits this protein. Pancreas.

Its subcellular location is the secreted. The enzyme catalyses an [RNA] containing cytidine + H2O = an [RNA]-3'-cytidine-3'-phosphate + a 5'-hydroxy-ribonucleotide-3'-[RNA].. It carries out the reaction an [RNA] containing uridine + H2O = an [RNA]-3'-uridine-3'-phosphate + a 5'-hydroxy-ribonucleotide-3'-[RNA].. In terms of biological role, endonuclease that catalyzes the cleavage of RNA on the 3' side of pyrimidine nucleotides. Acts on single-stranded and double-stranded RNA. In Proechimys guairae (Guaira spiny rat), this protein is Ribonuclease pancreatic (RNASE1).